Here is a 628-residue protein sequence, read N- to C-terminus: Set1/Ash2 histone methyltransferase complex subunit ASH2 (628 aa).

Methionine 1 carries the N-acetylmethionine modification. Over residues 1–18 (MAAAGAGPGQEAGAGPGP) the composition is skewed to gly residues. The PHD-type; atypical zinc-finger motif lies at 1–66 (MAAAGAGPGQ…SGEAEGGEAN (66 aa)). Residues 1–107 (MAAAGAGPGQ…QAGSVDEENG (107 aa)) form a disordered region. The span at 36-65 (AAGAAAPPGEGISAAPTVEPSSGEAEGGEA) shows a compositional bias: low complexity. The interval 67–177 (LVDVSGGLET…MCLSALANLT (111 aa)) is DNA-binding. The residue at position 101 (serine 101) is a Phosphoserine. The segment at 117–150 (CGICTKWFTADTFGIDTSSCLPFMTNYSFHCNVC) adopts a C4-type zinc-finger fold. Residues 235–252 (LVKEHPDPGSKDPEEDYP) are compositionally biased toward basic and acidic residues. Positions 235–331 (LVKEHPDPGS…AQRLPPHGYP (97 aa)) are disordered. Polar residues predominate over residues 270 to 282 (NQKQSSAVSTSGN). The segment covering 283–295 (LNGGIAAGSSGKG) has biased composition (gly residues). Position 296 is an asymmetric dimethylarginine; by PRMT1 and PRMT5 (arginine 296). A Phosphoserine modification is found at serine 316. The segment at 316-628 (SDPLFSAQRL…DGRRSPPWEP (313 aa)) is interaction with RBBP5. The B30.2/SPRY domain maps to 360–583 (LDCWAGKPIP…VSINFGPCFK (224 aa)).

In terms of assembly, interacts with HCFC1. Core component of several methyltransferase-containing complexes including MLL1/MLL, MLL2/3 (also named ASCOM complex) and MLL4/WBP7. Each complex is at least composed of ASH2L, RBBP5, WDR5, DPY30, one or more specific histone methyltransferases (KMT2A/MLL1, KMT2D/MLL2, KMT2C/MLL3 and KMT2B/MLL4), and the facultative components PAGR1, BACC1, CHD8, E2F6, HCFC1, HCFC2, HSP70, INO80C, KDM6A, KANSL1, LAS1L, MAX, MCRS1, MEN1, MGA, KAT8/MOF, NCOA6, PAXIP1/PTIP, PELP1, PHF20, PRP31, RING2, RUVB1/TIP49A, RUVB2/TIP49B, SENP3, TAF1, TAF4, TAF6, TAF7, TAF9, TEX10 and alpha- and beta-tubulin. Component of the SET1 complex, at least composed of the catalytic subunit (SETD1A or SETD1B), WDR5, WDR82, RBBP5, ASH2L/ASH2, CXXC1/CFP1, HCFC1 and DPY30. Found in a complex with RBBP5, ASH2L, DPY30, KMT2A, KMT2D and WDR5. Component of a histone methylation complex composed of at least ZNF335, RBBP5, ASH2L and WDR5; the complex may have histone H3-specific methyltransferase activity, however does not have specificity for 'Lys-4' of histone H3. Within the complex, interacts with ZNF335. Interacts with RBBP5. Components of this complex may associate with components of a nuclear receptor-mediated transcription complex to form a complex at least composed of ZNF335, HCFC1, CCAR2, EMSY, MKI67, RBBP5, ASH2L and WDR5. Within this complex also interacts with CCAR2 and EMSY. Interacts with DPY30. Interacts with SETD1A and SETD1B. In terms of processing, both monomethylated and dimethylated on arginine residues in the C-terminus. Arg-296 is the major site. Methylation is not required for nuclear localization, nor for MLL complex integrity or maintenance of global histone H3K4me3 levels. As to expression, ubiquitously expressed. Predominantly expressed in adult heart and testis and fetal lung and liver, with barely detectable expression in adult lung, liver, kidney, prostate, and peripheral leukocytes.

The protein resides in the nucleus. Transcriptional regulator. Component or associated component of some histone methyltransferase complexes which regulates transcription through recruitment of those complexes to gene promoters. Component of the Set1/Ash2 histone methyltransferase (HMT) complex, a complex that specifically methylates 'Lys-4' of histone H3, but not if the neighboring 'Lys-9' residue is already methylated. As part of the MLL1/MLL complex it is involved in methylation and dimethylation at 'Lys-4' of histone H3. May play a role in hematopoiesis. In association with RBBP5 and WDR5, stimulates the histone methyltransferase activities of KMT2A, KMT2B, KMT2C, KMT2D, SETD1A and SETD1B. The polypeptide is Set1/Ash2 histone methyltransferase complex subunit ASH2 (ASH2L) (Homo sapiens (Human)).